The sequence spans 522 residues: DNA damage-binding protein CMR1 (522 aa).

Positions 38 to 100 are disordered; that stretch reads AGVLEKSRAP…DNQLLKMGSP (63 aa). A compositionally biased stretch (polar residues) spans 54 to 63; the sequence is TTNTRATKSA. The residue at position 64 (Ser-64) is a Phosphoserine. Thr-69 bears the Phosphothreonine mark. Positions 75–84 are enriched in basic and acidic residues; that stretch reads LRGESADDVK. WD repeat units follow at residues 183–224, 239–281, 287–327, 331–371, 388–427, 442–481, and 482–521; these read ITYE…LADS, LFTK…EVLT, DDSL…SEYN, LADK…KKPE, DSRL…HLSA, GRWT…LAHL, and PTAT…IKQE. A Phosphoserine modification is found at Ser-224.

Belongs to the WD repeat DDB2/WDR76 family.

It localises to the cytoplasm. The protein resides in the nucleus. In terms of biological role, DNA-binding protein that binds to both single- and double-stranded DNA. Binds preferentially to UV-damaged DNA in vitro. May be involved in DNA-metabolic processes. The protein is DNA damage-binding protein CMR1 of Saccharomyces cerevisiae (strain ATCC 204508 / S288c) (Baker's yeast).